We begin with the raw amino-acid sequence, 261 residues long: Carbonic anhydrase 1 (261 aa).

Residue alanine 2 is modified to N-acetylalanine. An Alpha-carbonic anhydrase domain is found at 4–261 (ADWGYGSENG…LKGRTVRASF (258 aa)). Catalysis depends on histidine 65, which acts as the Proton donor/acceptor. Histidine 95, histidine 97, and histidine 120 together coordinate Zn(2+). Residues threonine 200 and 200–201 (TH) each bind substrate. Positions 239-261 (AVPVLSNHRPPQPLKGRTVRASF) are disordered.

Belongs to the alpha-carbonic anhydrase family. Requires Zn(2+) as cofactor.

Its subcellular location is the cytoplasm. It carries out the reaction hydrogencarbonate + H(+) = CO2 + H2O. The enzyme catalyses urea = cyanamide + H2O. With respect to regulation, inhibited by acetazolamide. Catalyzes the reversible hydration of carbon dioxide. Can hydrate cyanamide to urea. The chain is Carbonic anhydrase 1 (Ca1) from Mus musculus (Mouse).